The chain runs to 225 residues: PKHD-type hydroxylase YbiX (225 aa).

The Fe2OG dioxygenase domain maps to 78–177 (TLSTPLFNRY…RVASFMWIQS (100 aa)). Residues His-96, Asp-98, and His-158 each contribute to the Fe cation site. Arg-168 provides a ligand contact to 2-oxoglutarate.

Fe(2+) serves as cofactor. It depends on L-ascorbate as a cofactor.

This is PKHD-type hydroxylase YbiX from Escherichia coli O45:K1 (strain S88 / ExPEC).